We begin with the raw amino-acid sequence, 147 residues long: Peroxynitrite isomerase (147 aa).

H137 provides a ligand contact to heme b.

Belongs to the nitrobindin family. In terms of assembly, homodimer. The cofactor is heme b.

The enzyme catalyses peroxynitrite = nitrate. The protein operates within nitrogen metabolism. Heme-binding protein able to scavenge peroxynitrite and to protect free L-tyrosine against peroxynitrite-mediated nitration, by acting as a peroxynitrite isomerase that converts peroxynitrite to nitrate. Therefore, this protein likely plays a role in peroxynitrite sensing and in the detoxification of reactive nitrogen and oxygen species (RNS and ROS, respectively). Is able to bind nitric oxide (NO) in vitro, but may act as a sensor of peroxynitrite levels in vivo. The protein is Peroxynitrite isomerase of Frankia alni (strain DSM 45986 / CECT 9034 / ACN14a).